The primary structure comprises 539 residues: MSSIQCLNPKAELARHAAALELNISGARGLQDVMRSNLGPKGTLKMLVSGAGDIKLTKDGNVLLHEMAIQHPTASMIAKASTAQDDVTGDGTTSTVLLIGELLKQAESLVLEGLHPRIVTEGFEWANTKTLELLEKFKKEAPVERDLLVEVCRTALRTKLHQKLADHITECVVDAVLAIRRDGEEPDLHMVEKMEMHHDSDMDTTLVRGLVLDHGARHPDMPRHVKDAYILTCNVSLEYEKTEVNSGLFYKTAKEREALLAAEREFITRRVHKIIELKKKVIDNSPDGKNKGFVVINQKGIDPPSLDLLASEGILALRRAKRRNMERLQLAVGGEAVNSVDDLTPEDLGWAGLVYEHSLGEEKYTFIEECRAPKSVTLLIKGPNKHTITQIKDAIHDGLRAVFNTIVDKAVLPGAAAFEIAAYVMLKKDVENLKGRAKLGAEAFAQALLVIPKTLAVNGGYDAQETLVKLIEEKTAAGPDIAVGLDLETGGAVEPQGIWDNVTVKKNSISSATVLACNLLLVDEVMRAGMTNLKQPQPE.

Belongs to the TCP-1 chaperonin family. In terms of assembly, heterooligomeric complex of about 850 to 900 kDa that forms two stacked rings, 12 to 16 nm in diameter.

It localises to the cytoplasm. Its function is as follows. Molecular chaperone; assists the folding of proteins upon ATP hydrolysis. Known to play a role, in vitro, in the folding of actin and tubulin. The chain is T-complex protein 1 subunit zeta (cct-6) from Caenorhabditis elegans.